The chain runs to 480 residues: MVKICCIGAGYVGGPTMAVIALKCPDVEVAVVDISVPRINAWNSDTLPIYEPGLDDVVKQCRGKNLFFSTDVEKHVREADIVFVSVNTPTKTRGLGAGKAADLTYWESAARMIADVSVSDKIVVEKSTVPVKTAEAIEKILTHNSKGIKFQILSNPEFLAEGTAIKDLFNPDRVLIGGRETPEGFKAVQTLKNVYAHWVPEGQIITTNLWSAELSKLAANAFLAQRISSVNAMSALCEATGADVTQVSYAVGTDSRIGPKFLNSSVGFGGSCFQKDILNLVYICECNGLPEVAEYWKQVIKINDYQKSRFVNRVVSSMFNSVSNKKIAVLGFAFKKDTGDTRETPAIDVCKGLLEDKARLSIYDPQVTEDQIQRDLSMNKFDWDHPLHLQPMSPTTVKQVTVTWDAYEATKDAHGICIMTEWDEFKNLDFQKIFDNMQKPAFVFDGRNIMNLQKLREIGFIVYSIGKPLDDWLKDMPAVA.

Residues 8-13, aspartate 33, arginine 38, 86-90, 127-128, and glutamate 161 each bind NAD(+); these read GAGYVG, VNTPT, and ST. Substrate-binding positions include 157-161, 216-223, and 256-269; these read EFLAE, KLAANAFL, and RIGPKFLNSSVGFG. Cysteine 272 serves as the catalytic Nucleophile. Residue 272–275 coordinates NAD(+); it reads CFQK. Residue 334–335 coordinates substrate; sequence FK. Arginine 342 lines the NAD(+) pocket. Arginine 447 contributes to the substrate binding site.

This sequence belongs to the UDP-glucose/GDP-mannose dehydrogenase family. As to expression, preferentially expressed in roots.

It catalyses the reaction UDP-alpha-D-glucose + 2 NAD(+) + H2O = UDP-alpha-D-glucuronate + 2 NADH + 3 H(+). It functions in the pathway nucleotide-sugar biosynthesis; UDP-alpha-D-glucuronate biosynthesis; UDP-alpha-D-glucuronate from UDP-alpha-D-glucose: step 1/1. Inhibited by UDP-xylose. Involved in the biosynthesis of UDP-glucuronic acid (UDP-GlcA), providing nucleotide sugars for cell-wall polymers. Required for the formation of cell wall ingrowths on the outer cell walls of nematode-induced syncytia. The polypeptide is UDP-glucose 6-dehydrogenase 2 (UGD2) (Arabidopsis thaliana (Mouse-ear cress)).